The following is a 511-amino-acid chain: Maturase K (511 aa).

The protein belongs to the intron maturase 2 family. MatK subfamily.

The protein resides in the plastid. Its subcellular location is the chloroplast. In terms of biological role, usually encoded in the trnK tRNA gene intron. Probably assists in splicing its own and other chloroplast group II introns. This chain is Maturase K, found in Bowiea volubilis (Climbing onion).